Consider the following 764-residue polypeptide: FAST kinase domain-containing protein 5, mitochondrial (764 aa).

The transit peptide at 1-27 (MAATLKSLKLLRYQAFCSPSAFGAVRS) directs the protein to the mitochondrion. The interval 68 to 94 (IPTTSSARPGLEFSKTSSSKASTLQLG) is disordered. The segment covering 81-93 (SKTSSSKASTLQL) has biased composition (polar residues). Residue Ser-95 is modified to Phosphoserine. Residue Lys-507 is modified to N6-acetyllysine. The RAP domain maps to 697-757 (LAIQFTNRNQ…RLEKLAFLHE (61 aa)).

It belongs to the FAST kinase family. As to quaternary structure, found in a complex with GRSF1, DDX28, DHX30 and FASTKD2. Associates with the 12S mitochondrial rRNA (12S mt-rRNA).

The protein resides in the mitochondrion matrix. It localises to the mitochondrion nucleoid. In terms of biological role, plays an important role in the processing of non-canonical mitochondrial mRNA precursors. This chain is FAST kinase domain-containing protein 5, mitochondrial (FASTKD5), found in Pongo abelii (Sumatran orangutan).